Here is a 978-residue protein sequence, read N- to C-terminus: Transcription factor MYCGRDRAFT_87993 (978 aa).

C2H2-type zinc fingers lie at residues V2–H24 and F30–H52. A DNA-binding region (zn(2)-C6 fungal-type) is located at residues C79–C105. Disordered stretches follow at residues A113–F231 and T426–A445. Residues S152 to S165 are compositionally biased toward low complexity. Polar residues predominate over residues G432–A445.

The protein resides in the nucleus. Transcription factor; part of the gene cluster 29 that mediates the biosynthesis of dihydroxynaphthalene (DHN)-melanin, a bluish-green pigment forming a dark layer in the conidial wall that protects the conidia from UV radiations. The protein is Transcription factor MYCGRDRAFT_87993 of Zymoseptoria tritici (strain CBS 115943 / IPO323) (Speckled leaf blotch fungus).